The chain runs to 601 residues: Elongation factor 4 (601 aa).

Positions 5–187 constitute a tr-type G domain; it reads ENIRNFCIVA…AIITTFPPPK (183 aa). GTP is bound by residues 17–22 and 134–137; these read DHGKST and NKID.

It belongs to the TRAFAC class translation factor GTPase superfamily. Classic translation factor GTPase family. LepA subfamily.

It localises to the cell inner membrane. It carries out the reaction GTP + H2O = GDP + phosphate + H(+). Functionally, required for accurate and efficient protein synthesis under certain stress conditions. May act as a fidelity factor of the translation reaction, by catalyzing a one-codon backward translocation of tRNAs on improperly translocated ribosomes. Back-translocation proceeds from a post-translocation (POST) complex to a pre-translocation (PRE) complex, thus giving elongation factor G a second chance to translocate the tRNAs correctly. Binds to ribosomes in a GTP-dependent manner. The chain is Elongation factor 4 from Treponema denticola (strain ATCC 35405 / DSM 14222 / CIP 103919 / JCM 8153 / KCTC 15104).